A 445-amino-acid polypeptide reads, in one-letter code: CBL-interacting serine/threonine-protein kinase 5 (445 aa).

A Protein kinase domain is found at 12 to 267 (YEMGRLLGKG…IPAIMRTPWL (256 aa)). Residues 18-26 (LGKGTFAKV) and K41 contribute to the ATP site. The Proton acceptor role is filled by D135. Positions 153–182 (DFGLSALPEQILQDGLLHTQCGTPAYVAPE) are activation loop. Position 157 is a phosphoserine (S157). T171 is modified (phosphothreonine). In terms of domain architecture, NAF spans 307-332 (ISPKFFNAFEFISSMSSGFDLSSLFE). The PPI stretch occupies residues 336-366 (KVQSVFTSRSSATEVMEKIETVTKEMNMKVK).

This sequence belongs to the protein kinase superfamily. CAMK Ser/Thr protein kinase family. SNF1 subfamily. Requires Mn(2+) as cofactor.

It catalyses the reaction L-seryl-[protein] + ATP = O-phospho-L-seryl-[protein] + ADP + H(+). The enzyme catalyses L-threonyl-[protein] + ATP = O-phospho-L-threonyl-[protein] + ADP + H(+). In terms of biological role, CIPK serine-threonine protein kinases interact with CBL proteins. Binding of a CBL protein to the regulatory NAF domain of CIPK protein lead to the activation of the kinase in a calcium-dependent manner. The chain is CBL-interacting serine/threonine-protein kinase 5 (CIPK5) from Arabidopsis thaliana (Mouse-ear cress).